The sequence spans 244 residues: Osmotin-like protein OSM34 (244 aa).

The first 22 residues, 1–22 (MANLLVSTFIFSALLLISTATA), serve as a signal peptide directing secretion. 8 cysteine pairs are disulfide-bonded: cysteine 31–cysteine 222, cysteine 72–cysteine 82, cysteine 87–cysteine 93, cysteine 138–cysteine 212, cysteine 143–cysteine 195, cysteine 151–cysteine 161, cysteine 165–cysteine 174, and cysteine 175–cysteine 182.

It belongs to the thaumatin family.

In Arabidopsis thaliana (Mouse-ear cress), this protein is Osmotin-like protein OSM34 (OSM34).